The primary structure comprises 327 residues: Probable cell division protein WhiA (327 aa).

Residues 275 to 308 (SLEELGRLADPVMTKDAVAGRIRRLLSMADRKAK) constitute a DNA-binding region (H-T-H motif). Positions 307-327 (AKTEGIPDTESAVTPELLEEA) are disordered.

This sequence belongs to the WhiA family.

Involved in cell division and chromosome segregation. This is Probable cell division protein WhiA from Mycobacteroides abscessus (strain ATCC 19977 / DSM 44196 / CCUG 20993 / CIP 104536 / JCM 13569 / NCTC 13031 / TMC 1543 / L948) (Mycobacterium abscessus).